Here is a 229-residue protein sequence, read N- to C-terminus: Prolactin (229 aa).

Residues 1 to 30 (MDSKVSSQKGSRLLLLLVVSNLLLCQGVVS) form the signal peptide. A disulfide bridge connects residues cysteine 34 and cysteine 41. A phosphoserine mark is found at serine 56, serine 64, and serine 120. 2 disulfides stabilise this stretch: cysteine 88-cysteine 204 and cysteine 221-cysteine 229.

This sequence belongs to the somatotropin/prolactin family. As to quaternary structure, interacts with PRLR.

It is found in the secreted. In terms of biological role, prolactin acts primarily on the mammary gland by promoting lactation. This Cervus elaphus (Red deer) protein is Prolactin (PRL).